The following is a 736-amino-acid chain: Phosphoribosylformylglycinamidine synthase subunit PurL (736 aa).

H49 is an active-site residue. 2 residues coordinate ATP: Y52 and K91. Mg(2+) is bound at residue E93. Substrate-binding positions include 94–97 (SHNH) and R116. Residue H95 is the Proton acceptor of the active site. Mg(2+) is bound at residue D117. Q240 is a substrate binding site. D268 is a binding site for Mg(2+). Position 312–314 (312–314 (ESQ)) interacts with substrate. Residues D493 and G530 each contribute to the ATP site. Residue N531 coordinates Mg(2+). Substrate is bound at residue S533.

It belongs to the FGAMS family. Monomer. Part of the FGAM synthase complex composed of 1 PurL, 1 PurQ and 2 PurS subunits.

It is found in the cytoplasm. The enzyme catalyses N(2)-formyl-N(1)-(5-phospho-beta-D-ribosyl)glycinamide + L-glutamine + ATP + H2O = 2-formamido-N(1)-(5-O-phospho-beta-D-ribosyl)acetamidine + L-glutamate + ADP + phosphate + H(+). The protein operates within purine metabolism; IMP biosynthesis via de novo pathway; 5-amino-1-(5-phospho-D-ribosyl)imidazole from N(2)-formyl-N(1)-(5-phospho-D-ribosyl)glycinamide: step 1/2. Its function is as follows. Part of the phosphoribosylformylglycinamidine synthase complex involved in the purines biosynthetic pathway. Catalyzes the ATP-dependent conversion of formylglycinamide ribonucleotide (FGAR) and glutamine to yield formylglycinamidine ribonucleotide (FGAM) and glutamate. The FGAM synthase complex is composed of three subunits. PurQ produces an ammonia molecule by converting glutamine to glutamate. PurL transfers the ammonia molecule to FGAR to form FGAM in an ATP-dependent manner. PurS interacts with PurQ and PurL and is thought to assist in the transfer of the ammonia molecule from PurQ to PurL. This Rhodopseudomonas palustris (strain ATCC BAA-98 / CGA009) protein is Phosphoribosylformylglycinamidine synthase subunit PurL.